A 307-amino-acid chain; its full sequence is Elongation factor Ts, mitochondrial (307 aa).

A mitochondrion-targeting transit peptide spans 1–19 (MIFTRLTRFVGHGTGLRLY).

It belongs to the EF-Ts family.

The protein localises to the mitochondrion. Its function is as follows. Associates with the EF-Tu.GDP complex and induces the exchange of GDP to GTP. It remains bound to the aminoacyl-tRNA.EF-Tu.GTP complex up to the GTP hydrolysis stage on the ribosome. The sequence is that of Elongation factor Ts, mitochondrial from Aedes aegypti (Yellowfever mosquito).